Consider the following 809-residue polypeptide: Hydrazine synthase subunit alpha (809 aa).

The signal sequence occupies residues 1-27; that stretch reads MGKRKLGVIASAFVAGALVCGSTLVNA. Cys303 lines the Zn(2+) pocket. 2 residues coordinate heme: Cys583 and Cys586. Zn(2+) is bound at residue His587. Residues Tyr591, Cys685, Cys688, His689, and His772 each coordinate heme. The region spanning 633-792 is the Cytochrome c domain; it reads KGVKHGEDVV…AIVEWIDLGA (160 aa).

Part of the hydrazine synthase complex that forms an elongated dimer of heterotrimers composed of one alpha, one beta and one gamma subunit. Requires heme c as cofactor.

Its subcellular location is the anammoxosome. The catalysed reaction is hydrazine + 3 Fe(III)-[cytochrome c] + H2O = nitric oxide + 3 Fe(II)-[cytochrome c] + NH4(+) + 2 H(+). It participates in nitrogen metabolism. Its function is as follows. Component of the hydrazine synthase complex that catalyzes the condensation of nitric oxide (NO) with ammonium to form hydrazine. The alpha subunit catalyzes the second half-reaction, i.e. the condensation of hydroxylamine formed in the active site of the gamma subunit with ammonia, yielding hydrazine. Is involved in anaerobic ammonium oxidation (anammox), a biological process in which nitrite is used as the electron acceptor in the conversion of ammonium to dinitrogen gas (N2) and water; this bacterial process has a major role in the Earth's nitrogen cycle and has been estimated to synthesize up to 50% of the dinitrogen gas emitted into our atmosphere from the oceans. This is Hydrazine synthase subunit alpha from Kuenenia stuttgartiensis.